Reading from the N-terminus, the 412-residue chain is MKIRTLSGSVLEPPSAVRATPGTSMLKLEPGGSTIPKIPFIRPSFPGPAELAEDFVQIAQANWYTNFGPNERRFARALRDYLGPHLHVATLANGTLALLAALHVSFGAGTRDRYLLMPSFTFVGVAQAALWTGYRPWFIDIDANTWQPCVHSARAVIERFRDRIAGILLANVFGVGNPQISVWEELAAEWELPIVLDSAAGFGSTYADGERLGGRGACEIFSFHATKPFAVGEGGALVSRDPRLVEHAYKFQNFGLVQTRESIQLGMNGKLSEISAAIGLRQLVGLDRRLASRRKVLECYRTGMADAGVRFQDNANVASLCFASACCTSADHKAAVLGSLRRHAIEARDYYNPPQHRHPYFVTNAELVESTDLAVTADICSRIVSLPVHDHMAPDDVARVVAAVQEAEVRGE.

An N6-(pyridoxal phosphate)lysine modification is found at Lys-227.

It belongs to the DegT/DnrJ/EryC1 family.

This Mycobacterium tuberculosis (strain CDC 1551 / Oshkosh) protein is Protein MT3510.